Here is a 313-residue protein sequence, read N- to C-terminus: Ribosomal RNA small subunit methyltransferase H (313 aa).

Residues 34–36, D53, F80, D101, and Q108 each bind S-adenosyl-L-methionine; that span reads GGH.

It belongs to the methyltransferase superfamily. RsmH family.

It localises to the cytoplasm. The enzyme catalyses cytidine(1402) in 16S rRNA + S-adenosyl-L-methionine = N(4)-methylcytidine(1402) in 16S rRNA + S-adenosyl-L-homocysteine + H(+). Specifically methylates the N4 position of cytidine in position 1402 (C1402) of 16S rRNA. The chain is Ribosomal RNA small subunit methyltransferase H from Lacticaseibacillus paracasei (strain ATCC 334 / BCRC 17002 / CCUG 31169 / CIP 107868 / KCTC 3260 / NRRL B-441) (Lactobacillus paracasei).